Reading from the N-terminus, the 528-residue chain is GMP synthase [glutamine-hydrolyzing] (528 aa).

A Glutamine amidotransferase type-1 domain is found at 13-204; the sequence is AIVILDFGSQ…VYHVCGCDPD (192 aa). The Nucleophile role is filled by C90. Residues H178 and E180 contribute to the active site. A GMPS ATP-PPase domain is found at 205 to 403; that stretch reads WTTAAFIDEA…LGLPEEIVRR (199 aa). Residue 232-238 participates in ATP binding; it reads SGGVDSS.

Homodimer.

It carries out the reaction XMP + L-glutamine + ATP + H2O = GMP + L-glutamate + AMP + diphosphate + 2 H(+). It participates in purine metabolism; GMP biosynthesis; GMP from XMP (L-Gln route): step 1/1. Functionally, catalyzes the synthesis of GMP from XMP. The polypeptide is GMP synthase [glutamine-hydrolyzing] (Synechococcus sp. (strain CC9605)).